Here is a 307-residue protein sequence, read N- to C-terminus: Ribonuclease Z (307 aa).

The Zn(2+) site is built by histidine 63, histidine 65, aspartate 67, histidine 68, histidine 143, aspartate 213, and histidine 271. Aspartate 67 acts as the Proton acceptor in catalysis.

The protein belongs to the RNase Z family. As to quaternary structure, homodimer. It depends on Zn(2+) as a cofactor.

The catalysed reaction is Endonucleolytic cleavage of RNA, removing extra 3' nucleotides from tRNA precursor, generating 3' termini of tRNAs. A 3'-hydroxy group is left at the tRNA terminus and a 5'-phosphoryl group is left at the trailer molecule.. In terms of biological role, zinc phosphodiesterase, which displays some tRNA 3'-processing endonuclease activity. Probably involved in tRNA maturation, by removing a 3'-trailer from precursor tRNA. The chain is Ribonuclease Z from Lactococcus lactis subsp. cremoris (strain SK11).